We begin with the raw amino-acid sequence, 205 residues long: Mitotic spindle assembly checkpoint protein MAD2A (205 aa).

An N-acetylalanine modification is found at Ala2. Phosphoserine is present on residues Ser6, Ser130, Ser170, Ser178, Ser185, and Ser195. Residues 14–197 (RGSAEIVAEF…TTIHKVNSMV (184 aa)) enclose the HORMA domain. Residues 195–205 (SMVAYKIPVND) form a required for assuming the closed conformation and for interaction with CDC20 region.

It belongs to the MAD2 family. In terms of assembly, monomer and homodimer. Heterodimerizes with MAD2L1 in order to form a tetrameric MAD1L1-MAD2L1 core complex. In the closed and open conformation, interacts with MAD1L1. Formation of a heterotetrameric core complex containing two molecules each of MAD1L1 and of MAD2L1 promotes binding of another molecule of MAD2L1 to each MAD2L1, resulting in a heterohexamer. Interacts with MAD2L1BP. Interacts with ADAM17/TACE. Interacts with CDC20. Dimeric MAD2L1 in the closed conformation interacts with CDC20. Monomeric MAD2L1 in the open conformation does not interact with CDC20. CDC20 competes with MAD1L1 for MAD2L1 binding. In the closed conformation, interacts with BUB1B. Interacts with TTK. Interacts with TPR. Binds to UBD (via ubiquitin-like 1 domain) during mitosis. Interacts with isoform 1 and isoform 2 of NEK2. Interacts with HSF1; this interaction occurs in mitosis. Interacts with isoform 3 of MAD1L1; this interaction leads to the cytoplasmic sequestration of MAD2L1. Post-translationally, phosphorylated on multiple serine residues. The level of phosphorylation varies during the cell cycle and is highest during mitosis. Phosphorylation abolishes interaction with MAD1L1 and reduces interaction with CDC20. Phosphorylated by NEK2.

It localises to the nucleus. The protein localises to the chromosome. Its subcellular location is the centromere. The protein resides in the kinetochore. It is found in the cytoplasm. It localises to the cytoskeleton. The protein localises to the spindle pole. In terms of biological role, component of the spindle-assembly checkpoint that prevents the onset of anaphase until all chromosomes are properly aligned at the metaphase plate. In the closed conformation (C-MAD2) forms a heterotetrameric complex with MAD1L1 at unattached kinetochores during prometaphase, the complex recruits open conformation molecules of MAD2L1 (O-MAD2) and then promotes the conversion of O-MAD2 to C-MAD2. Required for the execution of the mitotic checkpoint which monitors the process of kinetochore-spindle attachment and inhibits the activity of the anaphase promoting complex by sequestering CDC20 until all chromosomes are aligned at the metaphase plate. In Homo sapiens (Human), this protein is Mitotic spindle assembly checkpoint protein MAD2A (MAD2L1).